Here is a 449-residue protein sequence, read N- to C-terminus: Probable glycosyltransferase 5 (449 aa).

The segment covering 1–14 (MMEKHGGKVTSDRR) has biased composition (basic and acidic residues). The segment at 1 to 24 (MMEKHGGKVTSDRRAGRRQHGQRC) is disordered. Residues 1–28 (MMEKHGGKVTSDRRAGRRQHGQRCSASD) are Cytoplasmic-facing. A helical; Signal-anchor for type II membrane protein membrane pass occupies residues 29–49 (AAPLVVVVILIVAALFLILGP). At 50 to 449 (TGSSSFTVPR…HPTFRAARPT (400 aa)) the chain is on the lumenal side. A disordered region spans residues 74 to 109 (APPPPPPPAQMQAGANASSEEDSGLPPPRQLTDPPY). N-linked (GlcNAc...) asparagine glycosylation is found at Asn89, Asn413, and Asn422.

Belongs to the glycosyltransferase 34 family.

The protein localises to the golgi apparatus membrane. Functionally, probable glycosyltransferase that may be involved in the biosynthesis of xyloglucan. In Oryza sativa subsp. japonica (Rice), this protein is Probable glycosyltransferase 5.